A 546-amino-acid polypeptide reads, in one-letter code: Putative inactive G-type lectin S-receptor-like serine/threonine-protein kinase SRK (546 aa).

Residues 1 to 31 (MRGELPNKHHSYTFFVFLFFFLILFPDLSIS) form the signal peptide. The Extracellular portion of the chain corresponds to 32 to 441 (VNTLSATESL…FGERRTIRGK (410 aa)). Residues 34-154 (TLSATESLTI…KINESDEFLW (121 aa)) form the Bulb-type lectin domain. Asn-46, Asn-120, Asn-147, and Asn-243 each carry an N-linked (GlcNAc...) asparagine glycan. The region spanning 293–329 (PKDTCDLYGICGPYAYCDMSTSPTCNCIKGFQPLSPQ) is the EGF-like; atypical domain. 4 disulfide bridges follow: Cys-297/Cys-309, Cys-303/Cys-317, Cys-378/Cys-403, and Cys-382/Cys-388. Positions 348 to 428 (CGEDRFFRLM…DGQDLFVRLA (81 aa)) constitute a PAN domain. The N-linked (GlcNAc...) asparagine glycan is linked to Asn-387. A helical membrane pass occupies residues 442 to 462 (IIGLIIGISLMLVLSFIIYCF). The Cytoplasmic portion of the chain corresponds to 463-546 (WKKKQKRARA…IVYKGRLLDG (84 aa)). Residues 524–546 (FSDSNILGRGGFGIVYKGRLLDG) form the Protein kinase domain. 530–538 (LGRGGFGIV) serves as a coordination point for ATP.

This sequence belongs to the protein kinase superfamily. Ser/Thr protein kinase family.

It localises to the cell membrane. Truncated and inactivated form of SRK, the female specificity determinant of self-incompatibility when active. Most A.thaliana cultivars contain such an inactive form and thus, are self-fertiles. This Arabidopsis thaliana (Mouse-ear cress) protein is Putative inactive G-type lectin S-receptor-like serine/threonine-protein kinase SRK (PSEUDOSRKA).